A 196-amino-acid chain; its full sequence is Molybdenum cofactor guanylyltransferase (196 aa).

Residues 12 to 14 (LAG), K25, N53, D71, and D101 contribute to the GTP site. A Mg(2+)-binding site is contributed by D101.

Belongs to the MobA family. As to quaternary structure, monomer. Mg(2+) is required as a cofactor.

Its subcellular location is the cytoplasm. The enzyme catalyses Mo-molybdopterin + GTP + H(+) = Mo-molybdopterin guanine dinucleotide + diphosphate. Functionally, transfers a GMP moiety from GTP to Mo-molybdopterin (Mo-MPT) cofactor (Moco or molybdenum cofactor) to form Mo-molybdopterin guanine dinucleotide (Mo-MGD) cofactor. The polypeptide is Molybdenum cofactor guanylyltransferase (Bordetella petrii (strain ATCC BAA-461 / DSM 12804 / CCUG 43448)).